The chain runs to 464 residues: Histidine--tRNA ligase (464 aa).

Belongs to the class-II aminoacyl-tRNA synthetase family. As to quaternary structure, homodimer.

It localises to the cytoplasm. The enzyme catalyses tRNA(His) + L-histidine + ATP = L-histidyl-tRNA(His) + AMP + diphosphate + H(+). This is Histidine--tRNA ligase from Stenotrophomonas maltophilia (strain K279a).